The primary structure comprises 436 residues: Serine--tRNA ligase (436 aa).

The segment covering 43 to 55 (TKSEQLKQKRNEV) has biased composition (basic and acidic residues). The tract at residues 43–69 (TKSEQLKQKRNEVSDQIAQAKRNKEDA) is disordered. An L-serine-binding site is contributed by 237 to 239 (TAE). 268–270 (RSE) contacts ATP. Glutamate 291 contributes to the L-serine binding site. Residue 355 to 358 (EISS) participates in ATP binding. Serine 390 is an L-serine binding site.

This sequence belongs to the class-II aminoacyl-tRNA synthetase family. Type-1 seryl-tRNA synthetase subfamily. Homodimer. The tRNA molecule binds across the dimer.

Its subcellular location is the cytoplasm. The enzyme catalyses tRNA(Ser) + L-serine + ATP = L-seryl-tRNA(Ser) + AMP + diphosphate + H(+). It catalyses the reaction tRNA(Sec) + L-serine + ATP = L-seryl-tRNA(Sec) + AMP + diphosphate + H(+). The protein operates within aminoacyl-tRNA biosynthesis; selenocysteinyl-tRNA(Sec) biosynthesis; L-seryl-tRNA(Sec) from L-serine and tRNA(Sec): step 1/1. Its function is as follows. Catalyzes the attachment of serine to tRNA(Ser). Is also able to aminoacylate tRNA(Sec) with serine, to form the misacylated tRNA L-seryl-tRNA(Sec), which will be further converted into selenocysteinyl-tRNA(Sec). The protein is Serine--tRNA ligase of Lactobacillus gasseri (strain ATCC 33323 / DSM 20243 / BCRC 14619 / CIP 102991 / JCM 1131 / KCTC 3163 / NCIMB 11718 / NCTC 13722 / AM63).